The sequence spans 127 residues: Probable 4-amino-4-deoxy-L-arabinose-phosphoundecaprenol flippase subunit ArnF (127 aa).

Residues methionine 1–glycine 2 are Cytoplasmic-facing. A helical transmembrane segment spans residues leucine 3 to alanine 23. The Periplasmic portion of the chain corresponds to methionine 24 to threonine 47. Residues alanine 48–leucine 68 form a helical membrane-spanning segment. The Cytoplasmic portion of the chain corresponds to lysine 69 to alanine 76. The chain crosses the membrane as a helical span at residues tyrosine 77–leucine 97. Over asparagine 98–arginine 102 the chain is Periplasmic. Residues tryptophan 103–alanine 123 form a helical membrane-spanning segment. Residues alanine 124 to arginine 127 are Cytoplasmic-facing.

Belongs to the ArnF family. As to quaternary structure, heterodimer of ArnE and ArnF.

It is found in the cell inner membrane. The protein operates within bacterial outer membrane biogenesis; lipopolysaccharide biosynthesis. Translocates 4-amino-4-deoxy-L-arabinose-phosphoundecaprenol (alpha-L-Ara4N-phosphoundecaprenol) from the cytoplasmic to the periplasmic side of the inner membrane. The chain is Probable 4-amino-4-deoxy-L-arabinose-phosphoundecaprenol flippase subunit ArnF from Erwinia tasmaniensis (strain DSM 17950 / CFBP 7177 / CIP 109463 / NCPPB 4357 / Et1/99).